A 122-amino-acid chain; its full sequence is Large ribosomal subunit protein uL14c (122 aa).

Belongs to the universal ribosomal protein uL14 family. In terms of assembly, part of the 50S ribosomal subunit.

It is found in the plastid. It localises to the chloroplast. Its function is as follows. Binds to 23S rRNA. In Adiantum capillus-veneris (Maidenhair fern), this protein is Large ribosomal subunit protein uL14c.